The chain runs to 473 residues: Cannabinoid receptor 1 (473 aa).

At 1–118 (MKSILDGLAD…CFMILTASQQ (118 aa)) the chain is on the extracellular side. The interval 2 to 23 (KSILDGLADTTFRTITTDLLYM) is required for mitochondrial localization. Residues Asn79 and Asn85 are each glycosylated (N-linked (GlcNAc...) asparagine). The chain crosses the membrane as a helical span at residues 119–144 (LIIAVLSLTLGTFTVLENFLVLCVIL). Over 145 to 156 (QSRTLRCRPSYH) the chain is Cytoplasmic. Residues 157–177 (FIGSLAVADLLGSVIFVYSFL) traverse the membrane as a helical segment. At 178 to 189 (DFHVFHRKDSSN) the chain is on the extracellular side. The helical transmembrane segment at 190–214 (VFLFKLGGVTASFTASVGSLFLTAI) threads the bilayer. Topologically, residues 215–234 (DRYISIHRPLAYKRIVTRTK) are cytoplasmic. The helical transmembrane segment at 235-257 (AVIAFCVMWTIAIIIAVLPLLGW) threads the bilayer. The Extracellular segment spans residues 258-275 (NCKKLKSVCSDIFPLIDE). A helical membrane pass occupies residues 276-301 (NYLMFWIGVTSILLLFIVYAYVYILW). Over 302 to 346 (KAHSHAVRMLQRGTQKSIIIHTSEDGKVQITRPEQTRMDIRLAKT) the chain is Cytoplasmic. The helical transmembrane segment at 347–367 (LVLILVVLIICWGPLLAIMVY) threads the bilayer. Residues 368–379 (DVFGKMNNPIKT) lie on the Extracellular side of the membrane. Residues 380–401 (VFAFCSMLCLMDSTVNPIIYAL) form a helical membrane-spanning segment. Residues 402–473 (RSQDLRHAFL…VSTETSGEAV (72 aa)) lie on the Cytoplasmic side of the membrane. Cys417 is lipidated: S-palmitoyl cysteine.

This sequence belongs to the G-protein coupled receptor 1 family. Palmitoylation at Cys-417 is important for recruitment at both plasma membrane and lipid rafts and association with G protein alpha subunits.

It localises to the cell membrane. The protein localises to the mitochondrion outer membrane. It is found in the cell projection. The protein resides in the axon. Its subcellular location is the presynapse. With respect to regulation, hemopressin, a peptide derived from hemoglobin subunit alpha (HBA1 and/or HBA2), acts as an antagonist peptide: hemopressin-binding efficiently blocks cannabinoid receptor CNR1 and subsequent signaling. Its function is as follows. G-protein coupled receptor for cannabinoids. Mediates many cannabinoid-induced effects in the central nervous system (CNS), as well as in peripheral tissues. Regulates cellular respiration and energy production in response to cannabinoids. Signaling typically involves reduction in cyclic AMP. The chain is Cannabinoid receptor 1 (CNR1) from Taricha granulosa (Roughskin newt).